Reading from the N-terminus, the 63-residue chain is Putative F-box protein At1g47702 (63 aa).

The region spanning 23–63 (KDRISDLPNRILGKIIVKLPLDEAVRIMALSKRWKSIWDDN) is the F-box domain.

The sequence is that of Putative F-box protein At1g47702 from Arabidopsis thaliana (Mouse-ear cress).